A 421-amino-acid chain; its full sequence is Granaticin polyketide putative beta-ketoacyl synthase 1 (421 aa).

A Ketosynthase family 3 (KS3) domain is found at 2-416; sequence TRRVVITGVG…GFQSAMVLHR (415 aa). Residues Cys169, His309, and His346 each act as for beta-ketoacyl synthase activity in the active site.

This sequence belongs to the thiolase-like superfamily. Beta-ketoacyl-ACP synthases family.

It functions in the pathway antibiotic biosynthesis; granaticin biosynthesis. This is Granaticin polyketide putative beta-ketoacyl synthase 1 (gra-orf1) from Streptomyces violaceoruber.